A 135-amino-acid chain; its full sequence is Small ribosomal subunit protein bS18 (135 aa).

Residues 1 to 65 form a disordered region; sequence MARPDMGGPK…GDEGGGRRGF (65 aa). Residues 9–41 are compositionally biased toward gly residues; the sequence is PKMGGGFGGPRSGGFGGGGGGGGFGGGGFGGGR. Residues 42–61 are compositionally biased toward basic and acidic residues; that stretch reads GGDRGDRGDRDDRGGDEGGG.

The protein belongs to the bacterial ribosomal protein bS18 family. Part of the 30S ribosomal subunit. Forms a tight heterodimer with protein bS6.

Its function is as follows. Binds as a heterodimer with protein bS6 to the central domain of the 16S rRNA, where it helps stabilize the platform of the 30S subunit. The sequence is that of Small ribosomal subunit protein bS18 from Anaeromyxobacter dehalogenans (strain 2CP-C).